Reading from the N-terminus, the 206-residue chain is Large ribosomal subunit protein uL4 (206 aa).

The segment at 63-85 is disordered; it reads MYKQKGTGSARHGSARAPQFRGG.

It belongs to the universal ribosomal protein uL4 family. As to quaternary structure, part of the 50S ribosomal subunit.

Its function is as follows. One of the primary rRNA binding proteins, this protein initially binds near the 5'-end of the 23S rRNA. It is important during the early stages of 50S assembly. It makes multiple contacts with different domains of the 23S rRNA in the assembled 50S subunit and ribosome. Functionally, forms part of the polypeptide exit tunnel. This Beijerinckia indica subsp. indica (strain ATCC 9039 / DSM 1715 / NCIMB 8712) protein is Large ribosomal subunit protein uL4.